A 314-amino-acid chain; its full sequence is Cathepsin L 1 (314 aa).

An N-terminal signal peptide occupies residues 1 to 24; it reads MMLLGASLYLNNTQEVSDEIDTAN. A propeptide spans 25–109 (activation peptide); that stretch reads LYANWKMKYN…NAANSNFQYK (85 aa). 3 disulfide bridges follow: cysteine 132-cysteine 175, cysteine 166-cysteine 207, and cysteine 259-cysteine 302. Residue cysteine 135 is part of the active site. Residues histidine 265 and asparagine 282 contribute to the active site.

Belongs to the peptidase C1 family.

The protein localises to the secreted. The catalysed reaction is Specificity close to that of papain. As compared to cathepsin B, cathepsin L exhibits higher activity toward protein substrates, but has little activity on Z-Arg-Arg-NHMec, and no peptidyl-dipeptidase activity.. Functionally, may be involved in extracellular digestion. This chain is Cathepsin L 1, found in Paramecium tetraurelia.